Reading from the N-terminus, the 486-residue chain is Bifunctional protein HldE (486 aa).

Residues 1–329 (MSSRLSGLLD…AALSVAGPVG (329 aa)) form a ribokinase region. 204 to 207 (NAFE) provides a ligand contact to ATP. Asp274 is a catalytic residue. The interval 355-486 (FTNGCFDILH…AIIARSETGK (132 aa)) is cytidylyltransferase.

The protein in the N-terminal section; belongs to the carbohydrate kinase PfkB family. This sequence in the C-terminal section; belongs to the cytidylyltransferase family. Homodimer.

It carries out the reaction D-glycero-beta-D-manno-heptose 7-phosphate + ATP = D-glycero-beta-D-manno-heptose 1,7-bisphosphate + ADP + H(+). The catalysed reaction is D-glycero-beta-D-manno-heptose 1-phosphate + ATP + H(+) = ADP-D-glycero-beta-D-manno-heptose + diphosphate. It functions in the pathway nucleotide-sugar biosynthesis; ADP-L-glycero-beta-D-manno-heptose biosynthesis; ADP-L-glycero-beta-D-manno-heptose from D-glycero-beta-D-manno-heptose 7-phosphate: step 1/4. It participates in nucleotide-sugar biosynthesis; ADP-L-glycero-beta-D-manno-heptose biosynthesis; ADP-L-glycero-beta-D-manno-heptose from D-glycero-beta-D-manno-heptose 7-phosphate: step 3/4. In terms of biological role, catalyzes the phosphorylation of D-glycero-D-manno-heptose 7-phosphate at the C-1 position to selectively form D-glycero-beta-D-manno-heptose-1,7-bisphosphate. Catalyzes the ADP transfer from ATP to D-glycero-beta-D-manno-heptose 1-phosphate, yielding ADP-D-glycero-beta-D-manno-heptose. The sequence is that of Bifunctional protein HldE from Hyphomonas neptunium (strain ATCC 15444).